A 315-amino-acid chain; its full sequence is Probable cell division protein WhiA (315 aa).

The H-T-H motif DNA-binding region spans 280 to 313 (SLKELGQMLDPQVGKSGINHRLRKIEKIAEELRT).

This sequence belongs to the WhiA family.

Involved in cell division and chromosome segregation. This is Probable cell division protein WhiA from Clostridium botulinum (strain Alaska E43 / Type E3).